Here is a 58-residue protein sequence, read N- to C-terminus: Ribosome biogenesis protein Nop10 (58 aa).

Belongs to the NOP10 family.

Functionally, involved in ribosome biogenesis; more specifically in 18S rRNA pseudouridylation and in cleavage of pre-rRNA. The sequence is that of Ribosome biogenesis protein Nop10 from Methanobrevibacter smithii (strain ATCC 35061 / DSM 861 / OCM 144 / PS).